The primary structure comprises 582 residues: Vacuolar basic amino acid transporter 5 (582 aa).

The Cytoplasmic portion of the chain corresponds to 1–44 (MEETKYSSQQEIEGACGSDASLNARGSNDSPMGLSLYLCLASLT). The chain crosses the membrane as a helical span at residues 45–65 (LVLFITALDILIVGTIIDVVA). Topologically, residues 66–80 (EQFGNYSKTGWLVTG) are vacuolar. Asn70 carries N-linked (GlcNAc...) asparagine glycosylation. Residues 81–101 (YSLPNAILSLIWGRFASIIGF) traverse the membrane as a helical segment. Residues 102-104 (QHS) are Cytoplasmic-facing. The helical transmembrane segment at 105–125 (LILAILIFEAGSLIAALASSM) threads the bilayer. Residues 126-132 (NMLIFGR) are Vacuolar-facing. Residues 133–153 (VVAGVGGSGLQTLCFVIGCTM) form a helical membrane-spanning segment. Residues 154 to 160 (VGERSRP) lie on the Cytoplasmic side of the membrane. A helical membrane pass occupies residues 161–181 (LVISILSCAFAVAAIVGPIIG). The Vacuolar segment spans residues 182-191 (GAFTTHVTWR). The helical transmembrane segment at 192–212 (WCFYINLPIGGLAIIMFLLTY) threads the bilayer. The Cytoplasmic portion of the chain corresponds to 213–256 (KAENKGILQQIKDAIGTISSFTFSKFRHQVNFKRLMNGIIFKFD). A helical transmembrane segment spans residues 257 to 277 (FFGFALCSAGLVLFLLGLTFG). Residues 278–287 (GNKYSWNSGQ) are Vacuolar-facing. A helical membrane pass occupies residues 288–308 (VITYLVLGVLLFIFSLVYDFF). At 309 to 329 (LFDKFNPEPDNISYRPLLLRR) the chain is on the cytoplasmic side. The chain crosses the membrane as a helical span at residues 330 to 350 (LVAKPAIIIVNMVTFLLCTGY). The Vacuolar segment spans residues 351–372 (NGQMIYSVQFFQLIFASSAWKA). Residues 373 to 393 (GLHLIPIVITNVIAAIASGVI) form a helical membrane-spanning segment. Over 394 to 401 (TKKLGLVK) the chain is Cytoplasmic. A helical transmembrane segment spans residues 402 to 422 (PLLIFGGVLGVIGAGLMTLMT). N-linked (GlcNAc...) asparagine glycosylation is present at Asn423. At 423–430 (NTSTKSTQ) the chain is on the vacuolar side. A helical membrane pass occupies residues 431 to 451 (IGVLLLPGFSLGFALQASLMS). Over 452-469 (AQLQITKDRPEAAMDFIE) the chain is Cytoplasmic. A helical transmembrane segment spans residues 470-492 (VTAFNTFMKSLGTTLGGVLSTTV). At 493 to 539 (FSASFHNKVSRAHLEPYEGKTVDDMILYRLQNYDGSHSTIGNILSDS) the chain is on the vacuolar side. Residues 540–560 (IKNVFWMDLGFYALGFLFCSF) traverse the membrane as a helical segment. The Cytoplasmic segment spans residues 561-582 (SSNKKLIIPKKDDTPEDNLEDK).

It belongs to the major facilitator superfamily.

Its subcellular location is the vacuole membrane. Its function is as follows. Transporter required for vacuolar uptake of basic amino acids. The polypeptide is Vacuolar basic amino acid transporter 5 (VBA5) (Saccharomyces cerevisiae (strain ATCC 204508 / S288c) (Baker's yeast)).